Reading from the N-terminus, the 152-residue chain is Small ribosomal subunit protein uS15 (152 aa).

The protein belongs to the universal ribosomal protein uS15 family. In terms of assembly, part of the 30S ribosomal subunit.

This chain is Small ribosomal subunit protein uS15, found in Methanocorpusculum labreanum (strain ATCC 43576 / DSM 4855 / Z).